Here is a 482-residue protein sequence, read N- to C-terminus: Retrovirus-related Pol polyprotein from type-1 retrotransposable element R2 (482 aa).

Residues 1–84 (AYADDLILFA…DYFKYLGSRY (84 aa)) enclose the Reverse transcriptase domain. Residues 208–482 (QIPAVEKFYQ…ATGGRGRGDI (275 aa)) form a nucleic acid-binding endonuclease region.

It carries out the reaction DNA(n) + a 2'-deoxyribonucleoside 5'-triphosphate = DNA(n+1) + diphosphate. This Popillia japonica (Japanese beetle) protein is Retrovirus-related Pol polyprotein from type-1 retrotransposable element R2.